A 246-amino-acid polypeptide reads, in one-letter code: Pyridoxine 5'-phosphate synthase (246 aa).

2 residues coordinate 3-amino-2-oxopropyl phosphate: asparagine 8 and arginine 19. Histidine 44 serves as the catalytic Proton acceptor. 1-deoxy-D-xylulose 5-phosphate contacts are provided by arginine 46 and histidine 51. Glutamate 76 serves as the catalytic Proton acceptor. Position 106 (threonine 106) interacts with 1-deoxy-D-xylulose 5-phosphate. Histidine 198 acts as the Proton donor in catalysis. 3-amino-2-oxopropyl phosphate contacts are provided by residues aspartate 199 and 221–222 (GH).

This sequence belongs to the PNP synthase family. In terms of assembly, homooctamer; tetramer of dimers.

It localises to the cytoplasm. The catalysed reaction is 3-amino-2-oxopropyl phosphate + 1-deoxy-D-xylulose 5-phosphate = pyridoxine 5'-phosphate + phosphate + 2 H2O + H(+). It functions in the pathway cofactor biosynthesis; pyridoxine 5'-phosphate biosynthesis; pyridoxine 5'-phosphate from D-erythrose 4-phosphate: step 5/5. In terms of biological role, catalyzes the complicated ring closure reaction between the two acyclic compounds 1-deoxy-D-xylulose-5-phosphate (DXP) and 3-amino-2-oxopropyl phosphate (1-amino-acetone-3-phosphate or AAP) to form pyridoxine 5'-phosphate (PNP) and inorganic phosphate. The polypeptide is Pyridoxine 5'-phosphate synthase (Mesorhizobium japonicum (strain LMG 29417 / CECT 9101 / MAFF 303099) (Mesorhizobium loti (strain MAFF 303099))).